The sequence spans 37 residues: MQWNAFSFVSYVYLRYFISFRPNIVLASVRLSWYSII.

This is an uncharacterized protein from Saccharomyces cerevisiae (strain ATCC 204508 / S288c) (Baker's yeast).